Consider the following 272-residue polypeptide: Phosphatidylglycerol--prolipoprotein diacylglyceryl transferase (272 aa).

The next 4 membrane-spanning stretches (helical) occupy residues 15-35, 53-73, 94-114, and 117-137; these read LGPLYVHMYSVFMLAGALVLF, AFAVTSLLIPVILGARLWHVV, GLGFIGGVFSGLICFFVIAKI, and VPPFTFLDALAPGILVALCFA. An a 1,2-diacyl-sn-glycero-3-phospho-(1'-sn-glycerol)-binding site is contributed by Arg138. Helical transmembrane passes span 174–194, 199–219, and 237–257; these read FHPIFLYEIILNVFIIVILLV, VFVKTVFPKGSVFAAFLVLYG, and FGLDLNYVGAAAMIIVGVLIA.

The protein belongs to the Lgt family.

It is found in the cell membrane. The catalysed reaction is L-cysteinyl-[prolipoprotein] + a 1,2-diacyl-sn-glycero-3-phospho-(1'-sn-glycerol) = an S-1,2-diacyl-sn-glyceryl-L-cysteinyl-[prolipoprotein] + sn-glycerol 1-phosphate + H(+). Its pathway is protein modification; lipoprotein biosynthesis (diacylglyceryl transfer). Catalyzes the transfer of the diacylglyceryl group from phosphatidylglycerol to the sulfhydryl group of the N-terminal cysteine of a prolipoprotein, the first step in the formation of mature lipoproteins. The polypeptide is Phosphatidylglycerol--prolipoprotein diacylglyceryl transferase (Tropheryma whipplei (strain TW08/27) (Whipple's bacillus)).